The primary structure comprises 426 residues: Phosphomethylpyrimidine synthase (426 aa).

Residues M94, Y123, H162, 184-186 (SRG), 225-228 (NGMR), and E264 contribute to the substrate site. H268 contacts Zn(2+). Y291 contributes to the substrate binding site. Residue H332 coordinates Zn(2+). [4Fe-4S] cluster-binding residues include C406, C409, and C413.

This sequence belongs to the ThiC family. [4Fe-4S] cluster serves as cofactor.

The enzyme catalyses 5-amino-1-(5-phospho-beta-D-ribosyl)imidazole + S-adenosyl-L-methionine = 4-amino-2-methyl-5-(phosphooxymethyl)pyrimidine + CO + 5'-deoxyadenosine + formate + L-methionine + 3 H(+). It participates in cofactor biosynthesis; thiamine diphosphate biosynthesis. Functionally, catalyzes the synthesis of the hydroxymethylpyrimidine phosphate (HMP-P) moiety of thiamine from aminoimidazole ribotide (AIR) in a radical S-adenosyl-L-methionine (SAM)-dependent reaction. The protein is Phosphomethylpyrimidine synthase of Methanospirillum hungatei JF-1 (strain ATCC 27890 / DSM 864 / NBRC 100397 / JF-1).